A 273-amino-acid chain; its full sequence is Coiled-coil domain-containing protein 122 (273 aa).

A compositionally biased stretch (basic and acidic residues) spans 1-17 (MSDNKERKSQGFPKEDN). Residues 1 to 39 (MSDNKERKSQGFPKEDNQDTSSLADAVEKVAKQQQSQAS) form a disordered region. Coiled-coil stretches lie at residues 24 to 116 (ADAV…TAQE) and 179 to 269 (NRIT…RKCI).

This is Coiled-coil domain-containing protein 122 (CCDC122) from Homo sapiens (Human).